Consider the following 675-residue polypeptide: MTTSYMNGHVTEESDSGIKNLGLASPEEHPKHREMAVDCPGDLGTRLMPVRRSAQLERIRQQQEDMRRRREEEGKKQELDLNSSMRLKKLAQIPPKTGIDNPIFDTEEGIVLESPHYAVKILEVEDLFSSLKHIQHTLVDSQSQEDISLLLQLVQNRDFQNAFKIHNAVTVHMNKASPPFPLIANVQDLVQEVQTVLKPVHQKEGQELTALLNAPHIQALLLAHDKVAEQEMQLEPITDERVYESIGHYGGETVKIVRIEKARDIPLGATVRNEMDSVIISRIVKGGAAEKSGLLHEGDEVLEINGIEIRGKDVNEVFDLLSDMHGTLTFVLIPSQQIKPPPAKETVIHVKAHFDYDPSDDPYVPCRELGLSFQKGDILHVISQEDPNWWQAYREGDEDNQPLAGLVPGKSFQQQREAMKQTIEEDKEPEKSGKLWCAKKNKKKRKKVLYNANKNDDYDNEEILTYEEMSLYHQPANRKRPIILIGPQNCGQNELRQRLMNKEKDRFASAVPHTTRNRRDHEVAGRDYHFVSRQAFEADIAAGKFIEHGEFEKNLYGTSIDSVRQVINSGKICLLSLRAQSLKTLRNSDLKPYIIFIAPPSQERLRALLAKEGKNPKPEELREIIEKTREMEQNNGHYFDTAIVNSDLDKAYQELLRLINKLDTEPQWVPSTWLR.

2 disordered regions span residues 1–32 and 52–79; these read MTTS…HPKH and RSAQ…KQEL. The required for the correct localization of PALS1 and PATJ at cell-cell contacts and the normal formation of tight junctions and adherens junctions stretch occupies residues 1–345; that stretch reads MTTSYMNGHV…QQIKPPPAKE (345 aa). A phosphoserine mark is found at Ser-14 and Ser-25. The interaction with PARD6B stretch occupies residues 21-140; sequence LGLASPEEHP…LKHIQHTLVD (120 aa). Over residues 54-79 the composition is skewed to basic and acidic residues; the sequence is AQLERIRQQQEDMRRRREEEGKKQEL. A phosphoserine mark is found at Ser-83 and Ser-84. L27 domains follow at residues 120-177 and 179-235; these read KILE…NKAS and PFPL…MQLE. The interval 181 to 243 is interaction with LIN7C; it reads PLIANVQDLV…LEPITDERVY (63 aa). The region spanning 256–336 is the PDZ domain; sequence IVRIEKARDI…TLTFVLIPSQ (81 aa). In terms of domain architecture, SH3 spans 345 to 417; it reads ETVIHVKAHF…PGKSFQQQRE (73 aa). A Guanylate kinase-like domain is found at 479 to 660; that stretch reads KRPIILIGPQ…AYQELLRLIN (182 aa). Residue 486-493 participates in ATP binding; that stretch reads GPQNCGQN.

The protein belongs to the MAGUK family. In terms of assembly, heterodimer with MPP1. Forms a heterotrimeric complex composed of PALS1, LIN7B and PATJ; the N-terminal L27 domain of PALS1 interacts with the L27 domain of PATJ and the C-terminal L27 domain of PALS1 interacts with the L27 domain of LIN7B. Component of a complex composed of PALS1, CRB1 and MPP4. Component of a complex whose core is composed of ARHGAP17, AMOT, PALS1, PATJ and PARD3/PAR3. Component of a complex composed of PALS1, CRB1 and EPB41L5. Within the complex, interacts (via HOOK domain) with EPB41L5 (via FERM domain), and interacts with CRB1 (via intracellular domain). Component of a complex composed of PALS1, MPP3 and CRB1; PALS1 acts as a bridging protein between MPP3 (via guanylate kinase-like domain) and CRB1. Component of a complex composed of CRB3, PALS1 and PATJ. As part of the Crumbs complex; interacts with WWP1, the interaction is enhanced by AMOTL2 and facilitates WWP1 localization to the plasma membrane. The Crumbs complex promotes monoubiquitination of AMOTL2 by WWP1, which activates the Hippo signaling pathway. Interacts (via PDZ domain) with PATJ (via N-terminus). Interacts with EZR. Interacts (via PDZ domain) with CRB1 (via C-terminal ERLI motif). While the PDZ domain is sufficient for interaction with CRB1, the adjacent SH3 and guanylate kinase-like domains are likely to contribute to a high affinity interaction. Interacts with WWTR1/TAZ (via WW domain). Interacts with MPP7. Interacts (via PDZ domain) with CRB3 (via C-terminus). Interacts with LIN7C. Interacts with MPDZ. Interacts with PARD6B. Interacts with SC6A1. Interacts with CDH5; the interaction promotes PALS1 localization to cell junctions and is required for CDH5-mediated vascular lumen formation and endothelial cell. Interacts with NPHP1 (via coiled coil and SH3 domains). Interacts with NPHP4. Interacts with CRB2.

The protein resides in the golgi apparatus. It is found in the cell membrane. It localises to the endomembrane system. Its subcellular location is the cell junction. The protein localises to the tight junction. The protein resides in the adherens junction. It is found in the cell projection. It localises to the axon. Its subcellular location is the perikaryon. The protein localises to the apical cell membrane. In terms of biological role, plays a role in tight junction biogenesis and in the establishment of cell polarity in epithelial cells. Also involved in adherens junction biogenesis by ensuring correct localization of the exocyst complex protein EXOC4/SEC8 which allows trafficking of adherens junction structural component CDH1 to the cell surface. Plays a role through its interaction with CDH5 in vascular lumen formation and endothelial membrane polarity. Required during embryonic and postnatal retinal development. Required for the maintenance of cerebellar progenitor cells in an undifferentiated proliferative state, preventing premature differentiation, and is required for cerebellar histogenesis, fissure formation, cerebellar layer organization and cortical development. Plays a role in neuronal progenitor cell survival, potentially via promotion of mTOR signaling. Plays a role in the radial and longitudinal extension of the myelin sheath in Schwann cells. May modulate SC6A1/GAT1-mediated GABA uptake by stabilizing the transporter. May play a role in the T-cell receptor-mediated activation of NF-kappa-B. Required for localization of EZR to the apical membrane of parietal cells and may play a role in the dynamic remodeling of the apical cytoskeleton. Required for the normal polarized localization of the vesicular marker STX4. Required for the correct trafficking of the myelin proteins PMP22 and MAG. Involved in promoting phosphorylation and cytoplasmic retention of transcriptional coactivators YAP1 and WWTR1/TAZ which leads to suppression of TGFB1-dependent transcription of target genes such as CCN2/CTGF, SERPINE1/PAI1, SNAI1/SNAIL1 and SMAD7. This Rattus norvegicus (Rat) protein is Protein PALS1.